Reading from the N-terminus, the 199-residue chain is Large ribosomal subunit protein bL9 (199 aa).

The tract at residues 153 to 199 (KPVKASEKKGRRPRRDEEASDEQILAEENSVTEEAVSEEIQNSESEN) is disordered.

This sequence belongs to the bacterial ribosomal protein bL9 family.

In terms of biological role, binds to the 23S rRNA. The chain is Large ribosomal subunit protein bL9 from Treponema denticola (strain ATCC 35405 / DSM 14222 / CIP 103919 / JCM 8153 / KCTC 15104).